A 140-amino-acid polypeptide reads, in one-letter code: Ctenidin-1 (140 aa).

The signal sequence occupies residues 1–19 (MKHLIPLIVMASVVLAVYA). Gly-138 is subject to Glycine amide.

The protein belongs to the glycine-rich peptide family. Expressed in hemocytes (at protein level).

Its subcellular location is the secreted. Its function is as follows. Antimicrobial protein with bacteriostatic activity against the Gram-negative bacterium E.coli, and very weak activity against the Gram-positive bacterium S.aureus. Lacks activity against the yeast C.albicans. In Cupiennius salei (American wandering spider), this protein is Ctenidin-1.